The sequence spans 238 residues: 3-deoxy-D-manno-octulosonic acid kinase (238 aa).

Asp167 is an active-site residue.

Belongs to the protein kinase superfamily. KdkA/RfaP family.

It localises to the cell inner membrane. It carries out the reaction an alpha-Kdo-(2-&gt;6)-lipid IVA + ATP = a 4-O-phospho-alpha-Kdo-(2-&gt;6)-lipid IVA + ADP + H(+). The protein operates within bacterial outer membrane biogenesis; LPS core biosynthesis. Functionally, catalyzes the ATP-dependent phosphorylation of the 3-deoxy-D-manno-octulosonic acid (Kdo) residue in Kdo-lipid IV(A) at the 4-OH position. The protein is 3-deoxy-D-manno-octulosonic acid kinase of Vibrio parahaemolyticus serotype O3:K6 (strain RIMD 2210633).